The primary structure comprises 473 residues: Photosystem II CP43 reaction center protein (473 aa).

The propeptide occupies 1–14 (MKTLYSLRRFYHVE). An N-acetylthreonine modification is found at Thr-15. Thr-15 is modified (phosphothreonine). The next 5 membrane-spanning stretches (helical) occupy residues 69–93 (LFEV…PHLA), 134–155 (LLGP…KDRN), 178–200 (KALY…RKIT), 255–275 (KPFA…LSYS), and 291–312 (CFNN…ASQA). Glu-367 provides a ligand contact to [CaMn4O5] cluster. Residues 447–471 (RARAAAAGFEKGIDRDFEPVLSMTP) form a helical membrane-spanning segment.

The protein belongs to the PsbB/PsbC family. PsbC subfamily. As to quaternary structure, PSII is composed of 1 copy each of membrane proteins PsbA, PsbB, PsbC, PsbD, PsbE, PsbF, PsbH, PsbI, PsbJ, PsbK, PsbL, PsbM, PsbT, PsbX, PsbY, PsbZ, Psb30/Ycf12, at least 3 peripheral proteins of the oxygen-evolving complex and a large number of cofactors. It forms dimeric complexes. The cofactor is Binds multiple chlorophylls and provides some of the ligands for the Ca-4Mn-5O cluster of the oxygen-evolving complex. It may also provide a ligand for a Cl- that is required for oxygen evolution. PSII binds additional chlorophylls, carotenoids and specific lipids..

It localises to the plastid. It is found in the chloroplast thylakoid membrane. Functionally, one of the components of the core complex of photosystem II (PSII). It binds chlorophyll and helps catalyze the primary light-induced photochemical processes of PSII. PSII is a light-driven water:plastoquinone oxidoreductase, using light energy to abstract electrons from H(2)O, generating O(2) and a proton gradient subsequently used for ATP formation. This chain is Photosystem II CP43 reaction center protein, found in Jasminum nudiflorum (Winter jasmine).